We begin with the raw amino-acid sequence, 91 residues long: RNA-binding protein Hfq (91 aa).

The Sm domain occupies 9–69 (DRFLNMLRTG…ISTIMPSSFV (61 aa)).

Belongs to the Hfq family. As to quaternary structure, homohexamer.

In terms of biological role, RNA chaperone that binds small regulatory RNA (sRNAs) and mRNAs to facilitate mRNA translational regulation in response to envelope stress, environmental stress and changes in metabolite concentrations. Also binds with high specificity to tRNAs. In Pseudothermotoga lettingae (strain ATCC BAA-301 / DSM 14385 / NBRC 107922 / TMO) (Thermotoga lettingae), this protein is RNA-binding protein Hfq.